A 421-amino-acid polypeptide reads, in one-letter code: Replication factor C large subunit (421 aa).

63-70 (GPPGIGKT) lines the ATP pocket.

It belongs to the activator 1 small subunits family. RfcL subfamily. In terms of assembly, heteromultimer composed of small subunits (RfcS) and large subunits (RfcL).

Its function is as follows. Part of the RFC clamp loader complex which loads the PCNA sliding clamp onto DNA. This Pyrobaculum calidifontis (strain DSM 21063 / JCM 11548 / VA1) protein is Replication factor C large subunit.